The primary structure comprises 276 residues: Dermonecrotic toxin Ls4SicTox-alphaIII1i (276 aa).

The active site involves His-3. Mg(2+)-binding residues include Glu-23 and Asp-25. His-38 acts as the Nucleophile in catalysis. An intrachain disulfide couples Cys-42 to Cys-48. Residue Asp-82 participates in Mg(2+) binding.

It belongs to the arthropod phospholipase D family. Class I subfamily. Mg(2+) serves as cofactor. As to expression, expressed by the venom gland.

The protein localises to the secreted. It catalyses the reaction an N-(acyl)-sphingosylphosphocholine = an N-(acyl)-sphingosyl-1,3-cyclic phosphate + choline. The enzyme catalyses an N-(acyl)-sphingosylphosphoethanolamine = an N-(acyl)-sphingosyl-1,3-cyclic phosphate + ethanolamine. It carries out the reaction a 1-acyl-sn-glycero-3-phosphocholine = a 1-acyl-sn-glycero-2,3-cyclic phosphate + choline. The catalysed reaction is a 1-acyl-sn-glycero-3-phosphoethanolamine = a 1-acyl-sn-glycero-2,3-cyclic phosphate + ethanolamine. Dermonecrotic toxins cleave the phosphodiester linkage between the phosphate and headgroup of certain phospholipids (sphingolipid and lysolipid substrates), forming an alcohol (often choline) and a cyclic phosphate. This toxin acts on sphingomyelin (SM). It may also act on ceramide phosphoethanolamine (CPE), lysophosphatidylcholine (LPC) and lysophosphatidylethanolamine (LPE), but not on lysophosphatidylserine (LPS), and lysophosphatidylglycerol (LPG). It acts by transphosphatidylation, releasing exclusively cyclic phosphate products as second products. Induces dermonecrosis, hemolysis, increased vascular permeability, edema, inflammatory response, and platelet aggregation. This Loxosceles sp. (strain 4 GJB-2008) (Recluse spider) protein is Dermonecrotic toxin Ls4SicTox-alphaIII1i.